The primary structure comprises 142 residues: Nucleoside diphosphate kinase (142 aa).

Residues Lys11, Phe59, Arg87, Thr93, Arg104, and Asn114 each coordinate ATP. The Pros-phosphohistidine intermediate role is filled by His117.

This sequence belongs to the NDK family. Homotetramer. It depends on Mg(2+) as a cofactor.

The protein resides in the cytoplasm. The enzyme catalyses a 2'-deoxyribonucleoside 5'-diphosphate + ATP = a 2'-deoxyribonucleoside 5'-triphosphate + ADP. It carries out the reaction a ribonucleoside 5'-diphosphate + ATP = a ribonucleoside 5'-triphosphate + ADP. Major role in the synthesis of nucleoside triphosphates other than ATP. The ATP gamma phosphate is transferred to the NDP beta phosphate via a ping-pong mechanism, using a phosphorylated active-site intermediate. The protein is Nucleoside diphosphate kinase of Pectobacterium carotovorum subsp. carotovorum (strain PC1).